Consider the following 352-residue polypeptide: Ion-translocating oxidoreductase complex subunit D (352 aa).

The next 4 membrane-spanning stretches (helical) occupy residues 20-40 (IMLL…WFFG), 42-62 (GTLV…ALVL), 89-109 (IPPL…VIIA), and 123-143 (PAMI…TSWL). The residue at position 187 (Thr187) is an FMN phosphoryl threonine. 5 consecutive transmembrane segments (helical) span residues 214–234 (ILAG…GVWL), 242–262 (WHVP…GWLF), 267–287 (LAAP…FFIL), 301–321 (LIFG…GGYP), and 322–342 (DGVA…DYYT).

Belongs to the NqrB/RnfD family. The complex is composed of six subunits: RsxA, RsxB, RsxC, RsxD, RsxE and RsxG. FMN serves as cofactor.

It localises to the cell inner membrane. In terms of biological role, part of a membrane-bound complex that couples electron transfer with translocation of ions across the membrane. Required to maintain the reduced state of SoxR. In Escherichia coli (strain UTI89 / UPEC), this protein is Ion-translocating oxidoreductase complex subunit D.